The sequence spans 237 residues: Ribosomal RNA small subunit methyltransferase G (237 aa).

Residues Gly78, Phe83, 129-130 (AE), and Arg148 each bind S-adenosyl-L-methionine.

Belongs to the methyltransferase superfamily. RNA methyltransferase RsmG family.

The protein resides in the cytoplasm. In terms of biological role, specifically methylates the N7 position of a guanine in 16S rRNA. In Streptococcus thermophilus (strain CNRZ 1066), this protein is Ribosomal RNA small subunit methyltransferase G.